Reading from the N-terminus, the 150-residue chain is SsrA-binding protein (150 aa).

Belongs to the SmpB family.

Its subcellular location is the cytoplasm. Its function is as follows. Required for rescue of stalled ribosomes mediated by trans-translation. Binds to transfer-messenger RNA (tmRNA), required for stable association of tmRNA with ribosomes. tmRNA and SmpB together mimic tRNA shape, replacing the anticodon stem-loop with SmpB. tmRNA is encoded by the ssrA gene; the 2 termini fold to resemble tRNA(Ala) and it encodes a 'tag peptide', a short internal open reading frame. During trans-translation Ala-aminoacylated tmRNA acts like a tRNA, entering the A-site of stalled ribosomes, displacing the stalled mRNA. The ribosome then switches to translate the ORF on the tmRNA; the nascent peptide is terminated with the 'tag peptide' encoded by the tmRNA and targeted for degradation. The ribosome is freed to recommence translation, which seems to be the essential function of trans-translation. The protein is SsrA-binding protein of Magnetococcus marinus (strain ATCC BAA-1437 / JCM 17883 / MC-1).